We begin with the raw amino-acid sequence, 127 residues long: Glycine cleavage system H protein (127 aa).

Positions 22–104 (KVRIGITDFA…YEKAWMIVVE (83 aa)) constitute a Lipoyl-binding domain. The residue at position 63 (lysine 63) is an N6-lipoyllysine.

This sequence belongs to the GcvH family. In terms of assembly, the glycine cleavage system is composed of four proteins: P, T, L and H. Requires (R)-lipoate as cofactor.

The glycine cleavage system catalyzes the degradation of glycine. The H protein shuttles the methylamine group of glycine from the P protein to the T protein. Its function is as follows. Is also involved in protein lipoylation via its role as an octanoyl/lipoyl carrier protein intermediate. In Bacillus licheniformis (strain ATCC 14580 / DSM 13 / JCM 2505 / CCUG 7422 / NBRC 12200 / NCIMB 9375 / NCTC 10341 / NRRL NRS-1264 / Gibson 46), this protein is Glycine cleavage system H protein.